Here is a 345-residue protein sequence, read N- to C-terminus: Phosphoribosylformylglycinamidine cyclo-ligase (345 aa).

The protein belongs to the AIR synthase family.

It localises to the cytoplasm. The catalysed reaction is 2-formamido-N(1)-(5-O-phospho-beta-D-ribosyl)acetamidine + ATP = 5-amino-1-(5-phospho-beta-D-ribosyl)imidazole + ADP + phosphate + H(+). The protein operates within purine metabolism; IMP biosynthesis via de novo pathway; 5-amino-1-(5-phospho-D-ribosyl)imidazole from N(2)-formyl-N(1)-(5-phospho-D-ribosyl)glycinamide: step 2/2. This Methylococcus capsulatus (strain ATCC 33009 / NCIMB 11132 / Bath) protein is Phosphoribosylformylglycinamidine cyclo-ligase.